Consider the following 329-residue polypeptide: DNA-directed RNA polymerase subunit alpha (329 aa).

An alpha N-terminal domain (alpha-NTD) region spans residues 1-235; it reads MQGFVEDFLK…QQLEAFVDLR (235 aa). An alpha C-terminal domain (alpha-CTD) region spans residues 249–329; it reads FEPVLLRPVD…NWPPKSLLED (81 aa).

It belongs to the RNA polymerase alpha chain family. As to quaternary structure, homodimer. The RNAP catalytic core consists of 2 alpha, 1 beta, 1 beta' and 1 omega subunit. When a sigma factor is associated with the core the holoenzyme is formed, which can initiate transcription.

The catalysed reaction is RNA(n) + a ribonucleoside 5'-triphosphate = RNA(n+1) + diphosphate. Its function is as follows. DNA-dependent RNA polymerase catalyzes the transcription of DNA into RNA using the four ribonucleoside triphosphates as substrates. In Buchnera aphidicola subsp. Cinara cedri (strain Cc), this protein is DNA-directed RNA polymerase subunit alpha.